Reading from the N-terminus, the 197-residue chain is Crossover junction endodeoxyribonuclease RuvC (197 aa).

Catalysis depends on residues aspartate 7, glutamate 68, and aspartate 141. The Mg(2+) site is built by aspartate 7, glutamate 68, and aspartate 141. 2 stretches are compositionally biased toward low complexity: residues 165–181 and 188–197; these read AAPAAPVSRPAPATPAR and APARRPAGAS. A disordered region spans residues 165–197; that stretch reads AAPAAPVSRPAPATPARRSPRPAAPARRPAGAS.

It belongs to the RuvC family. In terms of assembly, homodimer which binds Holliday junction (HJ) DNA. The HJ becomes 2-fold symmetrical on binding to RuvC with unstacked arms; it has a different conformation from HJ DNA in complex with RuvA. In the full resolvosome a probable DNA-RuvA(4)-RuvB(12)-RuvC(2) complex forms which resolves the HJ. Requires Mg(2+) as cofactor.

The protein resides in the cytoplasm. It carries out the reaction Endonucleolytic cleavage at a junction such as a reciprocal single-stranded crossover between two homologous DNA duplexes (Holliday junction).. In terms of biological role, the RuvA-RuvB-RuvC complex processes Holliday junction (HJ) DNA during genetic recombination and DNA repair. Endonuclease that resolves HJ intermediates. Cleaves cruciform DNA by making single-stranded nicks across the HJ at symmetrical positions within the homologous arms, yielding a 5'-phosphate and a 3'-hydroxyl group; requires a central core of homology in the junction. The consensus cleavage sequence is 5'-(A/T)TT(C/G)-3'. Cleavage occurs on the 3'-side of the TT dinucleotide at the point of strand exchange. HJ branch migration catalyzed by RuvA-RuvB allows RuvC to scan DNA until it finds its consensus sequence, where it cleaves and resolves the cruciform DNA. The protein is Crossover junction endodeoxyribonuclease RuvC of Frankia alni (strain DSM 45986 / CECT 9034 / ACN14a).